Consider the following 200-residue polypeptide: Small ribosomal subunit protein eS1 (200 aa).

Belongs to the eukaryotic ribosomal protein eS1 family. In terms of assembly, part of the 30S ribosomal subunit.

In Thermococcus kodakarensis (strain ATCC BAA-918 / JCM 12380 / KOD1) (Pyrococcus kodakaraensis (strain KOD1)), this protein is Small ribosomal subunit protein eS1.